Consider the following 281-residue polypeptide: uncharacterized protein (281 aa).

Disordered regions lie at residues 192-212 and 227-281; these read SNSSVNLSMDKKSDDSKIQET and EDYV…SEEY. The span at 200–211 shows a compositional bias: basic and acidic residues; that stretch reads MDKKSDDSKIQE. Composition is skewed to acidic residues over residues 227-240 and 249-260; these read EDYVDGNEDCISDN and DTDSDLGDLEDP.

It belongs to the cullin family.

This is an uncharacterized protein from Acanthamoeba polyphaga (Amoeba).